The primary structure comprises 303 residues: Coenzyme PQQ synthesis protein B (303 aa).

It belongs to the PqqB family.

It participates in cofactor biosynthesis; pyrroloquinoline quinone biosynthesis. Its function is as follows. May be involved in the transport of PQQ or its precursor to the periplasm. This is Coenzyme PQQ synthesis protein B from Pseudomonas fluorescens (strain SBW25).